The following is a 157-amino-acid chain: Phosphopantetheine adenylyltransferase (157 aa).

Substrate is bound at residue threonine 10. ATP is bound by residues 10–11 (TF) and histidine 18. Lysine 42, leucine 74, and arginine 88 together coordinate substrate. ATP contacts are provided by residues 89–91 (GLR), glutamate 99, and 124–130 (NAFISSS).

The protein belongs to the bacterial CoaD family. As to quaternary structure, homohexamer. Mg(2+) serves as cofactor.

Its subcellular location is the cytoplasm. The enzyme catalyses (R)-4'-phosphopantetheine + ATP + H(+) = 3'-dephospho-CoA + diphosphate. Its pathway is cofactor biosynthesis; coenzyme A biosynthesis; CoA from (R)-pantothenate: step 4/5. Functionally, reversibly transfers an adenylyl group from ATP to 4'-phosphopantetheine, yielding dephospho-CoA (dPCoA) and pyrophosphate. In Helicobacter pylori (strain P12), this protein is Phosphopantetheine adenylyltransferase.